Reading from the N-terminus, the 346-residue chain is ATP-dependent (S)-NAD(P)H-hydrate dehydratase 2 (346 aa).

The segment at 1-20 (MMVHSPLATGPHPTTHLEPT) is disordered. The 312-residue stretch at 28-339 (LLRKAFQMIP…GYIGEAFEQV (312 aa)) folds into the YjeF C-terminal domain. (6S)-NADPHX is bound by residues Gly135 and 188–194 (NHVEFQR). Residues 228–232 (KGSID) and 248–257 (GSPKRCGGQG) contribute to the ATP site. Asp258 provides a ligand contact to (6S)-NADPHX.

Belongs to the NnrD/CARKD family. The cofactor is Mg(2+).

Its subcellular location is the cytoplasm. It carries out the reaction (6S)-NADHX + ATP = ADP + phosphate + NADH + H(+). It catalyses the reaction (6S)-NADPHX + ATP = ADP + phosphate + NADPH + H(+). Catalyzes the dehydration of the S-form of NAD(P)HX at the expense of ATP, which is converted to ADP. Together with NAD(P)HX epimerase, which catalyzes the epimerization of the S- and R-forms, the enzyme allows the repair of both epimers of NAD(P)HX, a damaged form of NAD(P)H that is a result of enzymatic or heat-dependent hydration. This is ATP-dependent (S)-NAD(P)H-hydrate dehydratase 2 from Puccinia graminis f. sp. tritici (strain CRL 75-36-700-3 / race SCCL) (Black stem rust fungus).